A 908-amino-acid chain; its full sequence is SKI/DACH domain-containing protein 1 (908 aa).

Residues 337 to 353 (HHHHHHHHHHHHHHHRA) show a composition bias toward basic residues. Residues 337–461 (HHHHHHHHHH…SSSGSSQVSV (125 aa)) form a disordered region. Low complexity-rich tracts occupy residues 370-389 (PHLGSFPESCSSDSESSSYS) and 396-410 (SDFGSSLSSSSNSVS). A compositionally biased stretch (acidic residues) spans 411-429 (SEEEEEEGEEEEEEEEEEG). Low complexity predominate over residues 449-461 (ESDSSSGSSQVSV). A Glycyl lysine isopeptide (Lys-Gly) (interchain with G-Cter in SUMO2) cross-link involves residue K688. 2 disordered regions span residues 744 to 763 (ETPSLNPLAQSQGLSCTLGS) and 792 to 818 (LQTPPVKPNLKSARSPRPTGKTETNEG). Positions 746–761 (PSLNPLAQSQGLSCTL) are enriched in polar residues.

It belongs to the DACH/dachshund family.

In Homo sapiens (Human), this protein is SKI/DACH domain-containing protein 1 (SKIDA1).